Here is a 183-residue protein sequence, read N- to C-terminus: ATP synthase subunit delta (183 aa).

It belongs to the ATPase delta chain family. F-type ATPases have 2 components, F(1) - the catalytic core - and F(0) - the membrane proton channel. F(1) has five subunits: alpha(3), beta(3), gamma(1), delta(1), epsilon(1). F(0) has three main subunits: a(1), b(2) and c(10-14). The alpha and beta chains form an alternating ring which encloses part of the gamma chain. F(1) is attached to F(0) by a central stalk formed by the gamma and epsilon chains, while a peripheral stalk is formed by the delta and b chains.

The protein localises to the cell membrane. Functionally, f(1)F(0) ATP synthase produces ATP from ADP in the presence of a proton or sodium gradient. F-type ATPases consist of two structural domains, F(1) containing the extramembraneous catalytic core and F(0) containing the membrane proton channel, linked together by a central stalk and a peripheral stalk. During catalysis, ATP synthesis in the catalytic domain of F(1) is coupled via a rotary mechanism of the central stalk subunits to proton translocation. In terms of biological role, this protein is part of the stalk that links CF(0) to CF(1). It either transmits conformational changes from CF(0) to CF(1) or is implicated in proton conduction. This is ATP synthase subunit delta from Oenococcus oeni (strain ATCC BAA-331 / PSU-1).